The following is a 76-amino-acid chain: Secreted RxLR effector protein 31 (76 aa).

A signal peptide spans 1 to 24 (MRHCACLFHLFLIGFLCNVYFSAC). Residues 49-64 (RILRANDSEFLLTEER) carry the RxLR-dEER motif. Asn-54 carries N-linked (GlcNAc...) asparagine glycosylation.

It belongs to the RxLR effector family.

It localises to the secreted. Its subcellular location is the host nucleus. The protein localises to the host cytoplasm. In terms of biological role, secreted effector that dos not suppress the host cell death induced by cell death-inducing proteins. The chain is Secreted RxLR effector protein 31 from Plasmopara viticola (Downy mildew of grapevine).